We begin with the raw amino-acid sequence, 273 residues long: Formamidopyrimidine-DNA glycosylase (273 aa).

The active-site Schiff-base intermediate with DNA is proline 2. Glutamate 3 (proton donor) is an active-site residue. Lysine 58 functions as the Proton donor; for beta-elimination activity in the catalytic mechanism. 3 residues coordinate DNA: histidine 92, arginine 111, and lysine 153. Residues 238 to 272 (KVYGREGQSCLSCSSTIIKIKHSGRSTFYCKTCQY) form an FPG-type zinc finger. The Proton donor; for delta-elimination activity role is filled by arginine 262.

The protein belongs to the FPG family. In terms of assembly, monomer. The cofactor is Zn(2+).

It catalyses the reaction Hydrolysis of DNA containing ring-opened 7-methylguanine residues, releasing 2,6-diamino-4-hydroxy-5-(N-methyl)formamidopyrimidine.. The enzyme catalyses 2'-deoxyribonucleotide-(2'-deoxyribose 5'-phosphate)-2'-deoxyribonucleotide-DNA = a 3'-end 2'-deoxyribonucleotide-(2,3-dehydro-2,3-deoxyribose 5'-phosphate)-DNA + a 5'-end 5'-phospho-2'-deoxyribonucleoside-DNA + H(+). Functionally, involved in base excision repair of DNA damaged by oxidation or by mutagenic agents. Acts as a DNA glycosylase that recognizes and removes damaged bases. Has a preference for oxidized purines, such as 7,8-dihydro-8-oxoguanine (8-oxoG). Has AP (apurinic/apyrimidinic) lyase activity and introduces nicks in the DNA strand. Cleaves the DNA backbone by beta-delta elimination to generate a single-strand break at the site of the removed base with both 3'- and 5'-phosphates. In Rickettsia africae (strain ESF-5), this protein is Formamidopyrimidine-DNA glycosylase.